A 157-amino-acid polypeptide reads, in one-letter code: S-ribosylhomocysteine lyase (157 aa).

The Fe cation site is built by H60, H64, and C127.

The protein belongs to the LuxS family. As to quaternary structure, homodimer. Requires Fe cation as cofactor.

The catalysed reaction is S-(5-deoxy-D-ribos-5-yl)-L-homocysteine = (S)-4,5-dihydroxypentane-2,3-dione + L-homocysteine. Its function is as follows. Involved in the synthesis of autoinducer 2 (AI-2) which is secreted by bacteria and is used to communicate both the cell density and the metabolic potential of the environment. The regulation of gene expression in response to changes in cell density is called quorum sensing. Catalyzes the transformation of S-ribosylhomocysteine (RHC) to homocysteine (HC) and 4,5-dihydroxy-2,3-pentadione (DPD). The sequence is that of S-ribosylhomocysteine lyase from Helicobacter acinonychis (strain Sheeba).